The sequence spans 738 residues: Melanotransferrin (738 aa).

The signal sequence occupies residues 1-19 (MRLLSVTFWLLLSLRTVVC). Transferrin-like domains follow at residues 23 to 357 (VQWC…GLLC) and 366 to 706 (LRWC…GMLS). 2 cysteine pairs are disulfide-bonded: C26–C63 and C36–C54. The Fe(3+) site is built by D78 and Y107. A glycan (N-linked (GlcNAc...) asparagine) is linked at N118. Intrachain disulfides connect C130–C216, C172–C189, C186–C199, and C257–C271. T132 lines the hydrogencarbonate pocket. The N-linked (GlcNAc...) asparagine glycan is linked to N135. Residues R136, V138, and G139 each contribute to the hydrogencarbonate site. Fe(3+) is bound at residue Y210. Residues H279 and Y451 each contribute to the Fe(3+) site. S462 is modified (phosphoserine). N515 carries an N-linked (GlcNAc...) asparagine glycan. Residues Y556 and H625 each coordinate Fe(3+). C709 carries the GPI-anchor amidated cysteine lipid modification. Residues 710 to 738 (SGAGAAVQRVPLLALLLLTLAAGLLPRVL) constitute a propeptide, removed in mature form.

The protein belongs to the transferrin family.

It is found in the cell membrane. Involved in iron cellular uptake. Seems to be internalized and then recycled back to the cell membrane. Binds a single atom of iron per subunit. Could also bind zinc. The polypeptide is Melanotransferrin (Meltf) (Mus musculus (Mouse)).